The primary structure comprises 319 residues: Ribonucleoside-diphosphate reductase small chain (319 aa).

Fe cation is bound by residues Asp70, Glu101, and His104. Tyr108 is a catalytic residue. The Fe cation site is built by Glu163, Glu197, and His200. Residues 313–319 (FSLDVDF) form an interaction with R1 region.

The protein belongs to the ribonucleoside diphosphate reductase small chain family. As to quaternary structure, interacts with RNR1/OPG080 subunit. Can interact with host RNR1 supunit. Fe cation serves as cofactor.

It catalyses the reaction a 2'-deoxyribonucleoside 5'-diphosphate + [thioredoxin]-disulfide + H2O = a ribonucleoside 5'-diphosphate + [thioredoxin]-dithiol. Functionally, ribonucleoside-diphosphate reductase holoenzyme provides the precursors necessary for viral DNA synthesis. Allows virus growth in non-dividing cells. Catalyzes the biosynthesis of deoxyribonucleotides from the corresponding ribonucleotides. The polypeptide is Ribonucleoside-diphosphate reductase small chain (OPG048) (Vaccinia virus (strain Ankara) (VACV)).